A 1508-amino-acid polypeptide reads, in one-letter code: DNA-directed RNA polymerase subunit beta' (1508 aa).

Positions 71, 73, 86, and 89 each coordinate Zn(2+). Residues D470, D472, and D474 each contribute to the Mg(2+) site. C804, C878, C885, and C888 together coordinate Zn(2+).

This sequence belongs to the RNA polymerase beta' chain family. In terms of assembly, the RNAP catalytic core consists of 2 alpha, 1 beta, 1 beta' and 1 omega subunit. When a sigma factor is associated with the core the holoenzyme is formed, which can initiate transcription. Requires Mg(2+) as cofactor. Zn(2+) is required as a cofactor.

It carries out the reaction RNA(n) + a ribonucleoside 5'-triphosphate = RNA(n+1) + diphosphate. In terms of biological role, DNA-dependent RNA polymerase catalyzes the transcription of DNA into RNA using the four ribonucleoside triphosphates as substrates. In Campylobacter fetus subsp. fetus (strain 82-40), this protein is DNA-directed RNA polymerase subunit beta'.